The primary structure comprises 308 residues: Mycothiol acetyltransferase (308 aa).

2 N-acetyltransferase domains span residues 16–152 (ETLA…RPLA) and 165–308 (VTVR…RTES). E47 is a binding site for 1D-myo-inositol 2-(L-cysteinylamino)-2-deoxy-alpha-D-glucopyranoside. 91 to 93 (LVV) lines the acetyl-CoA pocket. The 1D-myo-inositol 2-(L-cysteinylamino)-2-deoxy-alpha-D-glucopyranoside site is built by E192, K231, and E240. Acetyl-CoA contacts are provided by residues 244–246 (LGV) and 251–257 (QGGGLGK). Y278 contributes to the 1D-myo-inositol 2-(L-cysteinylamino)-2-deoxy-alpha-D-glucopyranoside binding site.

The protein belongs to the acetyltransferase family. MshD subfamily. In terms of assembly, monomer.

The enzyme catalyses 1D-myo-inositol 2-(L-cysteinylamino)-2-deoxy-alpha-D-glucopyranoside + acetyl-CoA = mycothiol + CoA + H(+). Functionally, catalyzes the transfer of acetyl from acetyl-CoA to desacetylmycothiol (Cys-GlcN-Ins) to form mycothiol. The sequence is that of Mycothiol acetyltransferase from Streptomyces avermitilis (strain ATCC 31267 / DSM 46492 / JCM 5070 / NBRC 14893 / NCIMB 12804 / NRRL 8165 / MA-4680).